The following is a 202-amino-acid chain: FMN-dependent NADH:quinone oxidoreductase 2 (202 aa).

FMN contacts are provided by residues Ser-9, 15 to 17 (SVS), 93 to 96 (MYNF), and 137 to 140 (SRGG).

This sequence belongs to the azoreductase type 1 family. Homodimer. It depends on FMN as a cofactor.

The enzyme catalyses 2 a quinone + NADH + H(+) = 2 a 1,4-benzosemiquinone + NAD(+). It catalyses the reaction N,N-dimethyl-1,4-phenylenediamine + anthranilate + 2 NAD(+) = 2-(4-dimethylaminophenyl)diazenylbenzoate + 2 NADH + 2 H(+). Functionally, quinone reductase that provides resistance to thiol-specific stress caused by electrophilic quinones. Its function is as follows. Also exhibits azoreductase activity. Catalyzes the reductive cleavage of the azo bond in aromatic azo compounds to the corresponding amines. This chain is FMN-dependent NADH:quinone oxidoreductase 2, found in Bradyrhizobium diazoefficiens (strain JCM 10833 / BCRC 13528 / IAM 13628 / NBRC 14792 / USDA 110).